A 444-amino-acid polypeptide reads, in one-letter code: Aflatoxin biosynthesis regulatory protein (444 aa).

A disordered region spans residues 1 to 26 (MVDHISPRASPGPIRSSQTRRARKLR). Residues 29–56 (CTSCASSKVRCTKEKPACARCIERGLAC) constitute a DNA-binding region (zn(2)-C6 fungal-type). Positions 64 to 167 (MGRNPRAPSP…QGLGGDLAGQ (104 aa)) are disordered. The span at 106–116 (TQAHTHAHSHP) shows a compositional bias: basic residues. The span at 120-130 (PQSHPQSNQPP) shows a compositional bias: low complexity. The span at 136 to 149 (PNGSSSVSAIFSHQ) shows a compositional bias: polar residues.

It is found in the nucleus. It functions in the pathway mycotoxin biosynthesis; aflatoxin biosynthesis. Its function is as follows. Involved in the regulation of aflatoxin biosynthesis. May have a role in nitrate assimilation and sclerotial morphogenesis. The chain is Aflatoxin biosynthesis regulatory protein (aflR) from Aspergillus parasiticus.